Here is a 185-residue protein sequence, read N- to C-terminus: 4-nitrophenol 4-monooxygenase/4-nitrocatechol 2-monooxygenase, reductase component (185 aa).

The protein belongs to the non-flavoprotein flavin reductase family. In terms of assembly, the 4-NP/4-NCA monooxygenase is composed of an oxygenase component NpcA and a reductase component NpcB.

It catalyses the reaction 4-nitrophenol + NADH + O2 + H(+) = 4-nitrocatechol + NAD(+) + H2O. It carries out the reaction 4-nitrocatechol + NADPH + O2 = 2-hydroxy-1,4-benzoquinone + nitrite + NADP(+) + H2O. The catalysed reaction is 4-nitrocatechol + NADH + O2 = 2-hydroxy-1,4-benzoquinone + nitrite + NAD(+) + H2O. The protein operates within aromatic compound metabolism. It participates in xenobiotic degradation. With respect to regulation, inhibited by methimazole. In terms of biological role, involved in the degradation of para-nitrophenol (4-NP). Catalyzes both the initial hydroxylation of 4-NP to produce 4-nitrocatechol (4-NCA) and the subsequent oxidative release of the nitro group from 4-NCA to produce 2-hydroxy-1,4-benzoquinone. It can also use 4-nitroresorcinol as substrate with a rate of nitrite release similar to that observed with the two physiological substrates, 4-PN and 4-NCA. In Rhodococcus opacus (Nocardia opaca), this protein is 4-nitrophenol 4-monooxygenase/4-nitrocatechol 2-monooxygenase, reductase component (npcB).